Consider the following 1425-residue polypeptide: Nephrocystin-4 (1425 aa).

Ser-145 bears the Phosphoserine mark. The disordered stretch occupies residues Phe-448 to Gln-554. Composition is skewed to low complexity over residues Pro-473–Ala-484 and Ser-507–Pro-530. The interval Leu-822 to Gln-1425 is sufficient for basal bodies localization.

The protein belongs to the NPHP4 family. In terms of assembly, interacts with NPHP1 and RPGRIP1L/NPHP8; NPHP1, NPHP4 and RPGRIP1L are proposed to form a functional NPHP1-4-8 module localized to cell-cell contacts and the ciliary transition zone; NPHP4 mediates the interaction between NPHP1 and RPGRIP1L. Interacts with IQCB1/NPHP5; the interaction likely requires additional interactors. Interacts with RPGRIP1, CEP164, JADE1, PALS1, INADL, PARD6A, INVS, DVL2. Interacts with INTU; INTU mediates the interaction between NPHP4 and DAAM1. Interacts with JADE1. Interacts with SPATA7. As to expression, expressed in the retina (at protein level).

Its subcellular location is the cytoplasm. The protein localises to the cytoskeleton. The protein resides in the cilium basal body. It is found in the microtubule organizing center. It localises to the centrosome. Its subcellular location is the cell junction. The protein localises to the tight junction. In terms of biological role, involved in the organization of apical junctions; the function is proposed to implicate a NPHP1-4-8 module. Does not seem to be strictly required for ciliogenesis. Required for building functional cilia. Involved in the organization of the subapical actin network in multiciliated epithelial cells. Seems to recruit INT to basal bodies of motile cilia which subsequently interacts with actin-modifying proteins such as DAAM1. In cooperation with INVS may down-regulate the canonical Wnt pathway and promote the Wnt-PCP pathway by regulating expression and subcellular location of disheveled proteins. Stabilizes protein levels of JADE1 and promotes its translocation to the nucleus leading to cooperative inhibition of canonical Wnt signaling. Acts as negative regulator of the hippo pathway by association with LATS1 and modifying LATS1-dependent phosphorylation and localization of WWTR1/TAZ. In Mus musculus (Mouse), this protein is Nephrocystin-4 (Nphp4).